The sequence spans 202 residues: FMN-dependent NADH:quinone oxidoreductase (202 aa).

FMN is bound by residues Ser9, 15-17 (SAS), and 94-97 (MYNL).

It belongs to the azoreductase type 1 family. Homodimer. Requires FMN as cofactor.

It carries out the reaction 2 a quinone + NADH + H(+) = 2 a 1,4-benzosemiquinone + NAD(+). It catalyses the reaction N,N-dimethyl-1,4-phenylenediamine + anthranilate + 2 NAD(+) = 2-(4-dimethylaminophenyl)diazenylbenzoate + 2 NADH + 2 H(+). Functionally, quinone reductase that provides resistance to thiol-specific stress caused by electrophilic quinones. Its function is as follows. Also exhibits azoreductase activity. Catalyzes the reductive cleavage of the azo bond in aromatic azo compounds to the corresponding amines. The polypeptide is FMN-dependent NADH:quinone oxidoreductase (Gluconobacter oxydans (strain 621H) (Gluconobacter suboxydans)).